The chain runs to 155 residues: 17.4 kDa class III heat shock protein (155 aa).

The 121-residue stretch at 35 to 155 (GRGSSNNIPI…KPKTVQIAVS (121 aa)) folds into the sHSP domain.

It belongs to the small heat shock protein (HSP20) family. In terms of assembly, may form oligomeric structures.

The protein resides in the cytoplasm. This chain is 17.4 kDa class III heat shock protein (HSP17.4B), found in Arabidopsis thaliana (Mouse-ear cress).